The following is a 472-amino-acid chain: Gamma-glutamylputrescine synthetase PuuA (472 aa).

The 95-residue stretch at P35–G129 folds into the GS beta-grasp domain. The region spanning P136–A472 is the GS catalytic domain.

Belongs to the glutamine synthetase family. In terms of assembly, dodecamer. It depends on Mg(2+) as a cofactor. Mn(2+) serves as cofactor.

It catalyses the reaction putrescine + L-glutamate + ATP = gamma-L-glutamylputrescine + ADP + phosphate + H(+). It participates in amine and polyamine degradation; putrescine degradation; 4-aminobutanoate from putrescine: step 1/4. Its function is as follows. Involved in the breakdown of putrescine. Catalyzes the ATP-dependent gamma-glutamylation of putrescine, producing gamma-L-glutamylputrescine. Absolutely essential to utilize putrescine as both nitrogen and carbon sources and to decrease the toxicity of putrescine, which can lead to inhibition of cell growth and protein synthesis. In vitro is also able to use several diamines, and spermidine and spermine, instead of putrescine, but with a much lower activity, and cannot catalyze the gamma-glutamylation of ornithine or GABA. This Escherichia coli (strain K12) protein is Gamma-glutamylputrescine synthetase PuuA.